The chain runs to 246 residues: Ubiquinone/menaquinone biosynthesis C-methyltransferase UbiE (246 aa).

S-adenosyl-L-methionine-binding positions include threonine 75, aspartate 95, and 119–120; that span reads DA.

Belongs to the class I-like SAM-binding methyltransferase superfamily. MenG/UbiE family.

It carries out the reaction a 2-demethylmenaquinol + S-adenosyl-L-methionine = a menaquinol + S-adenosyl-L-homocysteine + H(+). It catalyses the reaction a 2-methoxy-6-(all-trans-polyprenyl)benzene-1,4-diol + S-adenosyl-L-methionine = a 5-methoxy-2-methyl-3-(all-trans-polyprenyl)benzene-1,4-diol + S-adenosyl-L-homocysteine + H(+). It functions in the pathway quinol/quinone metabolism; menaquinone biosynthesis; menaquinol from 1,4-dihydroxy-2-naphthoate: step 2/2. It participates in cofactor biosynthesis; ubiquinone biosynthesis. In terms of biological role, methyltransferase required for the conversion of demethylmenaquinol (DMKH2) to menaquinol (MKH2) and the conversion of 2-polyprenyl-6-methoxy-1,4-benzoquinol (DDMQH2) to 2-polyprenyl-3-methyl-6-methoxy-1,4-benzoquinol (DMQH2). This Desulfotalea psychrophila (strain LSv54 / DSM 12343) protein is Ubiquinone/menaquinone biosynthesis C-methyltransferase UbiE.